We begin with the raw amino-acid sequence, 1354 residues long: Phosphoribosylformylglycinamidine synthase (1354 aa).

ATP-binding positions include 327–338, 407–409, and A714; these read GATTGTGGRLRD and SGF. Residues D715, E754, N758, and D918 each coordinate Mg(2+). An ATP-binding site is contributed by S920. In terms of domain architecture, Glutamine amidotransferase type-1 spans 1087–1337; it reads VAVLREEGVN…EVSPTQSESP (251 aa). C1180 functions as the Nucleophile in the catalytic mechanism. Catalysis depends on residues H1310 and E1312.

It in the N-terminal section; belongs to the FGAMS family.

The enzyme catalyses N(2)-formyl-N(1)-(5-phospho-beta-D-ribosyl)glycinamide + L-glutamine + ATP + H2O = 2-formamido-N(1)-(5-O-phospho-beta-D-ribosyl)acetamidine + L-glutamate + ADP + phosphate + H(+). The protein operates within purine metabolism; IMP biosynthesis via de novo pathway; 5-amino-1-(5-phospho-D-ribosyl)imidazole from N(2)-formyl-N(1)-(5-phospho-D-ribosyl)glycinamide: step 1/2. Its function is as follows. Phosphoribosylformylglycinamidine synthase involved in the purines biosynthetic pathway. Catalyzes the ATP-dependent conversion of formylglycinamide ribonucleotide (FGAR) and glutamine to yield formylglycinamidine ribonucleotide (FGAM) and glutamate. Because of its role in metabolisms, is involved in sleep regulation. The chain is Phosphoribosylformylglycinamidine synthase from Drosophila melanogaster (Fruit fly).